We begin with the raw amino-acid sequence, 252 residues long: 3-deoxy-manno-octulosonate cytidylyltransferase (252 aa).

The protein belongs to the KdsB family.

It localises to the cytoplasm. It catalyses the reaction 3-deoxy-alpha-D-manno-oct-2-ulosonate + CTP = CMP-3-deoxy-beta-D-manno-octulosonate + diphosphate. Its pathway is nucleotide-sugar biosynthesis; CMP-3-deoxy-D-manno-octulosonate biosynthesis; CMP-3-deoxy-D-manno-octulosonate from 3-deoxy-D-manno-octulosonate and CTP: step 1/1. It functions in the pathway bacterial outer membrane biogenesis; lipopolysaccharide biosynthesis. In terms of biological role, activates KDO (a required 8-carbon sugar) for incorporation into bacterial lipopolysaccharide in Gram-negative bacteria. The polypeptide is 3-deoxy-manno-octulosonate cytidylyltransferase (Phocaeicola vulgatus (strain ATCC 8482 / DSM 1447 / JCM 5826 / CCUG 4940 / NBRC 14291 / NCTC 11154) (Bacteroides vulgatus)).